A 275-amino-acid chain; its full sequence is NADPH-dependent 7-cyano-7-deazaguanine reductase (275 aa).

Isoleucine 81 to serine 83 provides a ligand contact to substrate. Serine 83–lysine 84 provides a ligand contact to NADPH. The active-site Thioimide intermediate is the cysteine 181. The Proton donor role is filled by aspartate 188. Residue histidine 220–glutamate 221 participates in substrate binding. Arginine 249–glycine 250 contacts NADPH.

Belongs to the GTP cyclohydrolase I family. QueF type 2 subfamily. As to quaternary structure, homodimer.

Its subcellular location is the cytoplasm. It carries out the reaction 7-aminomethyl-7-carbaguanine + 2 NADP(+) = 7-cyano-7-deazaguanine + 2 NADPH + 3 H(+). It functions in the pathway tRNA modification; tRNA-queuosine biosynthesis. Its function is as follows. Catalyzes the NADPH-dependent reduction of 7-cyano-7-deazaguanine (preQ0) to 7-aminomethyl-7-deazaguanine (preQ1). This is NADPH-dependent 7-cyano-7-deazaguanine reductase from Xylella fastidiosa (strain M12).